The primary structure comprises 177 residues: ATP-dependent protease subunit HslV (177 aa).

Threonine 6 is a catalytic residue. Na(+) is bound by residues glycine 161, cysteine 164, and threonine 167.

Belongs to the peptidase T1B family. HslV subfamily. As to quaternary structure, a double ring-shaped homohexamer of HslV is capped on each side by a ring-shaped HslU homohexamer. The assembly of the HslU/HslV complex is dependent on binding of ATP.

The protein resides in the cytoplasm. It catalyses the reaction ATP-dependent cleavage of peptide bonds with broad specificity.. Allosterically activated by HslU binding. Protease subunit of a proteasome-like degradation complex believed to be a general protein degrading machinery. The polypeptide is ATP-dependent protease subunit HslV (Petrotoga mobilis (strain DSM 10674 / SJ95)).